Reading from the N-terminus, the 87-residue chain is Small ribosomal subunit protein bS18 (87 aa).

It belongs to the bacterial ribosomal protein bS18 family. In terms of assembly, part of the 30S ribosomal subunit. Forms a tight heterodimer with protein bS6.

Its function is as follows. Binds as a heterodimer with protein bS6 to the central domain of the 16S rRNA, where it helps stabilize the platform of the 30S subunit. The chain is Small ribosomal subunit protein bS18 from Nitratidesulfovibrio vulgaris (strain DSM 19637 / Miyazaki F) (Desulfovibrio vulgaris).